A 488-amino-acid chain; its full sequence is N-succinylglutamate 5-semialdehyde dehydrogenase (488 aa).

Glycine 221–glycine 226 provides a ligand contact to NAD(+). Residues glutamate 244 and cysteine 278 contribute to the active site.

It belongs to the aldehyde dehydrogenase family. AstD subfamily.

It carries out the reaction N-succinyl-L-glutamate 5-semialdehyde + NAD(+) + H2O = N-succinyl-L-glutamate + NADH + 2 H(+). It participates in amino-acid degradation; L-arginine degradation via AST pathway; L-glutamate and succinate from L-arginine: step 4/5. Its function is as follows. Catalyzes the NAD-dependent reduction of succinylglutamate semialdehyde into succinylglutamate. This chain is N-succinylglutamate 5-semialdehyde dehydrogenase, found in Pseudomonas fluorescens (strain ATCC BAA-477 / NRRL B-23932 / Pf-5).